The chain runs to 138 residues: Large ribosomal subunit protein uL14 (138 aa).

Belongs to the universal ribosomal protein uL14 family. In terms of assembly, part of the 50S ribosomal subunit. Forms a cluster with proteins L3 and L24e, part of which may contact the 16S rRNA in 2 intersubunit bridges.

Its function is as follows. Binds to 23S rRNA. Forms part of two intersubunit bridges in the 70S ribosome. The polypeptide is Large ribosomal subunit protein uL14 (Sulfurisphaera tokodaii (strain DSM 16993 / JCM 10545 / NBRC 100140 / 7) (Sulfolobus tokodaii)).